Consider the following 70-residue polypeptide: U2-agatoxin-Ao1d (70 aa).

An N-terminal signal peptide occupies residues 1-20; that stretch reads MRAIIYLLLISAMVFSMTKA. Positions 21–34 are excised as a propeptide; that stretch reads VPEEEGLQLSEDER. 3 cysteine pairs are disulfide-bonded: Cys37–Cys53, Cys44–Cys58, and Cys52–Cys68. Leu69 carries the post-translational modification Leucine amide.

It belongs to the neurotoxin 01 (U2-agtx) family. Expressed by the venom gland.

It localises to the secreted. Insect active toxin causing rapid but reversible paralysis in crickets. No activity shown in mammals. Does not show effect on mammalian voltage-gated calcium channels. The protein is U2-agatoxin-Ao1d of Agelena orientalis (Funnel-web spider).